The following is a 100-amino-acid chain: Guanine nucleotide exchange factor MSS4 homolog (100 aa).

Residues 1 to 100 (MSNLRIVCQH…YLLLCSLEKN (100 aa)) enclose the MSS4 domain. 4 residues coordinate Zn(2+): Cys-8, Cys-11, Cys-73, and Cys-76.

It belongs to the DSS4/MSS4 family.

In terms of biological role, guanine-nucleotide-releasing protein that acts on members of the sec4/ypt1/rab subfamily. This Schizosaccharomyces pombe (strain 972 / ATCC 24843) (Fission yeast) protein is Guanine nucleotide exchange factor MSS4 homolog.